The chain runs to 161 residues: Probable ubiquitin-conjugating enzyme E2 17 (161 aa).

In terms of domain architecture, UBC core spans 15 to 161; that stretch reads IATNRLQKEF…TRWRFHDDKV (147 aa). The Glycyl thioester intermediate role is filled by Cys99.

This sequence belongs to the ubiquitin-conjugating enzyme family.

The catalysed reaction is S-ubiquitinyl-[E1 ubiquitin-activating enzyme]-L-cysteine + [E2 ubiquitin-conjugating enzyme]-L-cysteine = [E1 ubiquitin-activating enzyme]-L-cysteine + S-ubiquitinyl-[E2 ubiquitin-conjugating enzyme]-L-cysteine.. It functions in the pathway protein modification; protein ubiquitination. In terms of biological role, accepts the ubiquitin from the E1 complex and catalyzes its covalent attachment to other proteins. The chain is Probable ubiquitin-conjugating enzyme E2 17 (UBC17) from Arabidopsis thaliana (Mouse-ear cress).